A 415-amino-acid chain; its full sequence is Tyrosine--tRNA ligase (415 aa).

Residue Tyr33 participates in L-tyrosine binding. Residues 38 to 47 carry the 'HIGH' region motif; sequence PSGESLHLGN. The L-tyrosine site is built by Tyr161 and Gln165. Positions 225-229 match the 'KMSKS' region motif; sequence KFGKS. Residue Lys228 coordinates ATP. Residues 350-414 enclose the S4 RNA-binding domain; it reads MVIDFLLQAK…KKNYFIVVWK (65 aa).

Belongs to the class-I aminoacyl-tRNA synthetase family. TyrS type 1 subfamily. As to quaternary structure, homodimer.

Its subcellular location is the cytoplasm. The catalysed reaction is tRNA(Tyr) + L-tyrosine + ATP = L-tyrosyl-tRNA(Tyr) + AMP + diphosphate + H(+). In terms of biological role, catalyzes the attachment of tyrosine to tRNA(Tyr) in a two-step reaction: tyrosine is first activated by ATP to form Tyr-AMP and then transferred to the acceptor end of tRNA(Tyr). This Mycoplasmoides gallisepticum (strain R(low / passage 15 / clone 2)) (Mycoplasma gallisepticum) protein is Tyrosine--tRNA ligase.